Reading from the N-terminus, the 385-residue chain is Isocitrate dehydrogenase [NAD] subunit beta, mitochondrial (385 aa).

Residues 1–33 (MAALSRVRWLTRALVAAPNPGAWRSLCTSTVAQ) constitute a mitochondrion transit peptide. An N6-acetyllysine modification is found at Lys199.

Belongs to the isocitrate and isopropylmalate dehydrogenases family. In terms of assembly, heterooligomer of subunits alpha (IDH3A), beta (IDH3B), and gamma (IDH3G) in the apparent ratio of 2:1:1. The heterodimer containing one IDH3A and one IDH3B subunit and the heterodimer containing one IDH3A and one IDH3G subunit assemble into a heterotetramer (which contains two subunits of IDH3A, one of IDH3B and one of IDH3G) and further into the heterooctamer. As to expression, isoform A is predominant in heart muscle; also found in brain, kidney and liver. Isoform B is present in kidney and liver.

It localises to the mitochondrion. The heterotetramer and the heterodimer composed of IDH3A and IDH3G subunits can be allosterically activated by citrate (CIT) or/and ADP, and the two activators can act independently or synergistically. The heterodimer composed of IDH3A and IDH3B subunits cannot be allosterically regulated and the allosteric regulation of the heterotetramer is through the IDH3G subunit and not the IDH3B subunit. The IDH3G subunit contains the allosteric site which consists of a CIT-binding site and an ADP-binding site, and the binding of CIT and ADP causes conformational changes at the allosteric site which are transmitted to the active site in the catalytic subunit (IDH3A) through a cascade of conformational changes at the heterodimer interface, leading to stabilization of the isocitrate-binding at the active site and thus activation of the enzyme. ATP can activate the heterotetramer and the heterodimer composed of IDH3A and IDH3G subunits at low concentrations but inhibits their activities at high concentrations, whereas ATP exhibits only inhibitory effect on the heterodimer composed of IDH3A and IDH3B subunits. In terms of biological role, plays a structural role to facilitate the assembly and ensure the full activity of the enzyme catalyzing the decarboxylation of isocitrate (ICT) into alpha-ketoglutarate. The heterodimer composed of the alpha (IDH3A) and beta (IDH3B) subunits and the heterodimer composed of the alpha (IDH3A) and gamma (IDH3G) subunits, have considerable basal activity but the full activity of the heterotetramer (containing two subunits of IDH3A, one of IDH3B and one of IDH3G) requires the assembly and cooperative function of both heterodimers. The chain is Isocitrate dehydrogenase [NAD] subunit beta, mitochondrial (IDH3B) from Bos taurus (Bovine).